Here is a 260-residue protein sequence, read N- to C-terminus: Hydroxyethylthiazole kinase (260 aa).

Residue Met-36 participates in substrate binding. Residues Arg-112 and Thr-157 each contribute to the ATP site. Gly-184 is a binding site for substrate.

The protein belongs to the Thz kinase family. It depends on Mg(2+) as a cofactor.

The catalysed reaction is 5-(2-hydroxyethyl)-4-methylthiazole + ATP = 4-methyl-5-(2-phosphooxyethyl)-thiazole + ADP + H(+). Its pathway is cofactor biosynthesis; thiamine diphosphate biosynthesis; 4-methyl-5-(2-phosphoethyl)-thiazole from 5-(2-hydroxyethyl)-4-methylthiazole: step 1/1. Its function is as follows. Catalyzes the phosphorylation of the hydroxyl group of 4-methyl-5-beta-hydroxyethylthiazole (THZ). This is Hydroxyethylthiazole kinase from Shouchella clausii (strain KSM-K16) (Alkalihalobacillus clausii).